Here is a 309-residue protein sequence, read N- to C-terminus: MKRKIIVGSRRSKLALTQSNWVINKLKENYPAFDFEIKEIVTKGDRILDVTLSKVGGKGLFVSEVEQALSDKTIDFAVHSMKDVPSSLKEGLVIGAIPKRESPLDCFVFNQVNALDELPHGSVIGTSSLRRAAQLLKHRPDFVIKPIRGNIDTRLQKLHAENFDAIILAKAGLARMGWLENTTLKLEDIPPELCLPAVGQGALAIECRESDQQIRDMLTSIHHEETGICVEAERVFLKKLNGGCEIPIAGFATKANEAVHFKGLVGNADGSIILEAEQTGANPSEIGNKVAEDLLSKGADTIIQELRNI.

Cysteine 244 carries the post-translational modification S-(dipyrrolylmethanemethyl)cysteine.

The protein belongs to the HMBS family. In terms of assembly, monomer. The cofactor is dipyrromethane.

The catalysed reaction is 4 porphobilinogen + H2O = hydroxymethylbilane + 4 NH4(+). It functions in the pathway porphyrin-containing compound metabolism; protoporphyrin-IX biosynthesis; coproporphyrinogen-III from 5-aminolevulinate: step 2/4. In terms of biological role, tetrapolymerization of the monopyrrole PBG into the hydroxymethylbilane pre-uroporphyrinogen in several discrete steps. The protein is Porphobilinogen deaminase of Listeria monocytogenes serotype 4a (strain HCC23).